A 122-amino-acid polypeptide reads, in one-letter code: uncharacterized protein (122 aa).

Transmembrane regions (helical) follow at residues V9–V29 and L60–M80.

The protein localises to the cytoplasm. The protein resides in the membrane. This is an uncharacterized protein from Schizosaccharomyces pombe (strain 972 / ATCC 24843) (Fission yeast).